Consider the following 346-residue polypeptide: Phosphoribosylformylglycinamidine cyclo-ligase (346 aa).

It belongs to the AIR synthase family.

The protein localises to the cytoplasm. The catalysed reaction is 2-formamido-N(1)-(5-O-phospho-beta-D-ribosyl)acetamidine + ATP = 5-amino-1-(5-phospho-beta-D-ribosyl)imidazole + ADP + phosphate + H(+). The protein operates within purine metabolism; IMP biosynthesis via de novo pathway; 5-amino-1-(5-phospho-D-ribosyl)imidazole from N(2)-formyl-N(1)-(5-phospho-D-ribosyl)glycinamide: step 2/2. The chain is Phosphoribosylformylglycinamidine cyclo-ligase from Bacillus cereus (strain G9842).